We begin with the raw amino-acid sequence, 978 residues long: Translation initiation factor IF-2 (978 aa).

2 disordered regions span residues 107 to 129 and 146 to 387; these read AEAP…NLEL and QEEE…HRVQ. Basic and acidic residues predominate over residues 146–169; sequence QEEELSERRRQREEQEARSREASE. The segment covering 170 to 186 has biased composition (low complexity); sequence KAAAVAAEAAEAAAAQA. The span at 215–259 shows a compositional bias: basic and acidic residues; sequence AEKEQHLAKEKGLAREKELAESKARAAEDVVRAADLGDRRRKAES. 2 stretches are compositionally biased toward low complexity: residues 295-326 and 349-361; these read KPAA…AGAG and PTRG…GAGR. Residues 375–386 are compositionally biased toward basic and acidic residues; sequence GSSDRDRDDHRV. The tr-type G domain occupies 478 to 647; that stretch reads PRAPVVTVMG…LLQAEVLELK (170 aa). Residues 487-494 are G1; the sequence is GHVDHGKT. Residue 487–494 participates in GTP binding; the sequence is GHVDHGKT. A G2 region spans residues 512-516; the sequence is GITQH. Positions 533 to 536 are G3; it reads DTPG. GTP-binding positions include 533-537 and 587-590; these read DTPGH and NKID. Residues 587-590 are G4; the sequence is NKID. The tract at residues 623-625 is G5; that stretch reads SAK.

It belongs to the TRAFAC class translation factor GTPase superfamily. Classic translation factor GTPase family. IF-2 subfamily.

The protein localises to the cytoplasm. In terms of biological role, one of the essential components for the initiation of protein synthesis. Protects formylmethionyl-tRNA from spontaneous hydrolysis and promotes its binding to the 30S ribosomal subunits. Also involved in the hydrolysis of GTP during the formation of the 70S ribosomal complex. The protein is Translation initiation factor IF-2 of Albidiferax ferrireducens (strain ATCC BAA-621 / DSM 15236 / T118) (Rhodoferax ferrireducens).